Here is a 232-residue protein sequence, read N- to C-terminus: 7-cyano-7-deazaguanine synthase (232 aa).

8 to 18 (FSGGQDSTTCL) is an ATP binding site. Residues Cys-189, Cys-198, Cys-201, and Cys-204 each coordinate Zn(2+).

It belongs to the QueC family. Requires Zn(2+) as cofactor.

It carries out the reaction 7-carboxy-7-deazaguanine + NH4(+) + ATP = 7-cyano-7-deazaguanine + ADP + phosphate + H2O + H(+). It functions in the pathway purine metabolism; 7-cyano-7-deazaguanine biosynthesis. Functionally, catalyzes the ATP-dependent conversion of 7-carboxy-7-deazaguanine (CDG) to 7-cyano-7-deazaguanine (preQ(0)). This Yersinia pseudotuberculosis serotype O:1b (strain IP 31758) protein is 7-cyano-7-deazaguanine synthase.